The sequence spans 432 residues: 3-phosphoshikimate 1-carboxyvinyltransferase (432 aa).

3-phosphoshikimate contacts are provided by K23, S24, and R28. K23 lines the phosphoenolpyruvate pocket. Residues G95 and R123 each coordinate phosphoenolpyruvate. The 3-phosphoshikimate site is built by S167, Q169, D317, and K344. Q169 serves as a coordination point for phosphoenolpyruvate. Catalysis depends on D317, which acts as the Proton acceptor. Phosphoenolpyruvate contacts are provided by R348 and R390.

Belongs to the EPSP synthase family. In terms of assembly, monomer.

It is found in the cytoplasm. The enzyme catalyses 3-phosphoshikimate + phosphoenolpyruvate = 5-O-(1-carboxyvinyl)-3-phosphoshikimate + phosphate. The protein operates within metabolic intermediate biosynthesis; chorismate biosynthesis; chorismate from D-erythrose 4-phosphate and phosphoenolpyruvate: step 6/7. Catalyzes the transfer of the enolpyruvyl moiety of phosphoenolpyruvate (PEP) to the 5-hydroxyl of shikimate-3-phosphate (S3P) to produce enolpyruvyl shikimate-3-phosphate and inorganic phosphate. This Staphylococcus aureus (strain bovine RF122 / ET3-1) protein is 3-phosphoshikimate 1-carboxyvinyltransferase.